The sequence spans 311 residues: MSTSQTVHDVIIIGSGPAGYTAAIYAARAQLKPLVFEGTQFGGALMTTTEVENYPGFREGITGPELMDQMREQALRFRADLRMEDVDAVQLEGPVKTVVVGDETHQARAVILAMGAAARHLGVPGEEALTGMGVSTCATCDGFFFRDQDIVVVGGGDSAMEEATFLTRFARSVTLIHRRDEFRASKIMLERARANEKITFLTNTEITQIEGDPKVTGVRLRDTVTGEESKLDVTGVFVAIGHDPRSELVRGQVELDDEGYVKVQGRTTYTSLDGVFAAGDLVDHTYRQAITAAGSGCAASIDAERWLAEQD.

FAD contacts are provided by residues 15–18 (SGPA), 37–44 (EGTQFGGA), Asn-53, and Val-86. Cys-137 and Cys-140 are oxidised to a cystine. Ser-158, His-177, Arg-183, Ile-240, and Tyr-260 together coordinate NADP(+). Residues Asp-280 and 287-290 (RQAI) contribute to the FAD site. Arg-287 contributes to the NADP(+) binding site.

This sequence belongs to the class-II pyridine nucleotide-disulfide oxidoreductase family. Homodimer. The cofactor is FAD.

It is found in the cytoplasm. The enzyme catalyses [thioredoxin]-dithiol + NADP(+) = [thioredoxin]-disulfide + NADPH + H(+). The sequence is that of Thioredoxin reductase from Mycolicibacterium smegmatis (Mycobacterium smegmatis).